The sequence spans 103 residues: Large ribosomal subunit protein bL21 (103 aa).

It belongs to the bacterial ribosomal protein bL21 family. Part of the 50S ribosomal subunit. Contacts protein L20.

Functionally, this protein binds to 23S rRNA in the presence of protein L20. The protein is Large ribosomal subunit protein bL21 of Methylococcus capsulatus (strain ATCC 33009 / NCIMB 11132 / Bath).